We begin with the raw amino-acid sequence, 192 residues long: Orotate phosphoribosyltransferase (192 aa).

116-124 (EDIVTTGLS) contributes to the 5-phospho-alpha-D-ribose 1-diphosphate binding site. Orotate-binding residues include Thr-120 and Arg-148.

The protein belongs to the purine/pyrimidine phosphoribosyltransferase family. PyrE subfamily. Homodimer. Mg(2+) serves as cofactor.

The enzyme catalyses orotidine 5'-phosphate + diphosphate = orotate + 5-phospho-alpha-D-ribose 1-diphosphate. The protein operates within pyrimidine metabolism; UMP biosynthesis via de novo pathway; UMP from orotate: step 1/2. Catalyzes the transfer of a ribosyl phosphate group from 5-phosphoribose 1-diphosphate to orotate, leading to the formation of orotidine monophosphate (OMP). The chain is Orotate phosphoribosyltransferase from Brucella abortus (strain S19).